Here is a 370-residue protein sequence, read N- to C-terminus: uncharacterized protein (370 aa).

Transmembrane regions (helical) follow at residues leucine 11–proline 31 and isoleucine 104–isoleucine 124. Residues histidine 145–leucine 197 form a disordered region. Over residues asparagine 147 to asparagine 194 the composition is skewed to low complexity. A run of 2 helical transmembrane segments spans residues isoleucine 227–valine 247 and leucine 310–isoleucine 330.

The protein localises to the membrane. This is an uncharacterized protein from Dictyostelium discoideum (Social amoeba).